Reading from the N-terminus, the 602-residue chain is mRNA-capping enzyme subunit beta (602 aa).

Residues 1–249 (MSEHHSKRAL…NESNSEETHD (249 aa)) form a disordered region. Positions 15 to 42 (LVNHDENDKSKLQKLADNESSVRSDDNR) are enriched in basic and acidic residues. The segment covering 48 to 64 (NIVNGNNSNSDLNSNGV) has biased composition (low complexity). A compositionally biased stretch (acidic residues) spans 65–76 (IEEDTDTDDDVG). The span at 88–110 (DYDKQDRFSPEKKRIQARKKDTS) shows a compositional bias: basic and acidic residues. Residues 114-128 (PSISNESPSNSKESS) show a composition bias toward low complexity. A compositionally biased stretch (basic and acidic residues) spans 141-169 (TDRKDSSEEKPDLTGPELVKEPDTNEYKR). The span at 171–181 (SIQSITNAEDT) shows a compositional bias: polar residues. Composition is skewed to basic and acidic residues over residues 213–222 (TEEHKPKTET) and 231–249 (QENK…ETHD). Catalysis depends on lysine 276, which acts as the N6-GMP-lysine intermediate.

This sequence belongs to the fungal TPase family. Heterodimer. The mRNA-capping enzyme is composed of two separate chains alpha and beta, respectively a mRNA guanylyltransferase and an mRNA 5'-triphosphate monophosphatase. Mg(2+) is required as a cofactor.

The protein resides in the nucleus. The catalysed reaction is a 5'-end triphospho-ribonucleoside in mRNA + H2O = a 5'-end diphospho-ribonucleoside in mRNA + phosphate + H(+). Its function is as follows. First step of mRNA capping. Converts the 5'-triphosphate end of a nascent mRNA chain into a diphosphate end. The sequence is that of mRNA-capping enzyme subunit beta (CET1) from Candida glabrata (strain ATCC 2001 / BCRC 20586 / JCM 3761 / NBRC 0622 / NRRL Y-65 / CBS 138) (Yeast).